Consider the following 104-residue polypeptide: Transcription and mRNA export factor ENY2 (104 aa).

Residues 1-14 (MADYGSDKKSRDNQ) show a composition bias toward basic and acidic residues. The disordered stretch occupies residues 1 to 22 (MADYGSDKKSRDNQMRSAINQQ).

It belongs to the ENY2 family. As to quaternary structure, component of the nuclear pore complex (NPC)-associated TREX-2 complex (transcription and export complex 2). Component of the SAGA transcription coactivator-HAT complex. Within the SAGA complex, participates in a subcomplex of SAGA called the DUB module (deubiquitination module).

The protein resides in the nucleus. The protein localises to the nucleoplasm. Involved in mRNA export coupled transcription activation by association with both the TREX-2 and the SAGA complexes. The transcription regulatory histone acetylation (HAT) complex SAGA is a multiprotein complex that activates transcription by remodeling chromatin and mediating histone acetylation and deubiquitination. Within the SAGA complex, participates in a subcomplex that specifically deubiquitinates histones. The SAGA complex is recruited to specific gene promoters by activators, where it is required for transcription. The TREX-2 complex functions in docking export-competent ribonucleoprotein particles (mRNPs) to the nuclear entrance of the nuclear pore complex (nuclear basket). TREX-2 participates in mRNA export and accurate chromatin positioning in the nucleus by tethering genes to the nuclear periphery. The protein is Transcription and mRNA export factor ENY2 of Ciona intestinalis (Transparent sea squirt).